Reading from the N-terminus, the 356-residue chain is tRNA-specific 2-thiouridylase MnmA (356 aa).

ATP is bound by residues 8–15 (GMSGGVDS) and M34. Catalysis depends on C103, which acts as the Nucleophile. C103 and C199 are oxidised to a cystine. Position 127 (G127) interacts with ATP. The tract at residues 149–151 (KDQ) is interaction with tRNA. C199 functions as the Cysteine persulfide intermediate in the catalytic mechanism. The tract at residues 305 to 306 (RY) is interaction with tRNA.

It belongs to the MnmA/TRMU family.

Its subcellular location is the cytoplasm. It catalyses the reaction S-sulfanyl-L-cysteinyl-[protein] + uridine(34) in tRNA + AH2 + ATP = 2-thiouridine(34) in tRNA + L-cysteinyl-[protein] + A + AMP + diphosphate + H(+). Functionally, catalyzes the 2-thiolation of uridine at the wobble position (U34) of tRNA, leading to the formation of s(2)U34. This Clostridium kluyveri (strain ATCC 8527 / DSM 555 / NBRC 12016 / NCIMB 10680 / K1) protein is tRNA-specific 2-thiouridylase MnmA.